The following is a 628-amino-acid chain: Glutamyl-tRNA(Gln) amidotransferase subunit E (628 aa).

It belongs to the GatB/GatE family. GatE subfamily. In terms of assembly, heterodimer of GatD and GatE.

The enzyme catalyses L-glutamyl-tRNA(Gln) + L-glutamine + ATP + H2O = L-glutaminyl-tRNA(Gln) + L-glutamate + ADP + phosphate + H(+). Functionally, allows the formation of correctly charged Gln-tRNA(Gln) through the transamidation of misacylated Glu-tRNA(Gln) in organisms which lack glutaminyl-tRNA synthetase. The reaction takes place in the presence of glutamine and ATP through an activated gamma-phospho-Glu-tRNA(Gln). The GatDE system is specific for glutamate and does not act on aspartate. The protein is Glutamyl-tRNA(Gln) amidotransferase subunit E of Thermococcus gammatolerans (strain DSM 15229 / JCM 11827 / EJ3).